The following is a 210-amino-acid chain: Large ribosomal subunit protein bL25 (210 aa).

The protein belongs to the bacterial ribosomal protein bL25 family. CTC subfamily. As to quaternary structure, part of the 50S ribosomal subunit; part of the 5S rRNA/L5/L18/L25 subcomplex. Contacts the 5S rRNA. Binds to the 5S rRNA independently of L5 and L18.

This is one of the proteins that binds to the 5S RNA in the ribosome where it forms part of the central protuberance. This is Large ribosomal subunit protein bL25 from Herminiimonas arsenicoxydans.